Consider the following 303-residue polypeptide: mRNA-capping enzyme subunit beta (303 aa).

This sequence belongs to the fungal TPase family. Heterodimer. The mRNA-capping enzyme is composed of two separate chains alpha and beta, respectively a mRNA guanylyltransferase and an mRNA 5'-triphosphate monophosphatase. Mg(2+) serves as cofactor.

The protein resides in the nucleus. It carries out the reaction a 5'-end triphospho-ribonucleoside in mRNA + H2O = a 5'-end diphospho-ribonucleoside in mRNA + phosphate + H(+). Its function is as follows. First step of mRNA capping. Converts the 5'-triphosphate end of a nascent mRNA chain into a diphosphate end. In Schizosaccharomyces pombe (strain 972 / ATCC 24843) (Fission yeast), this protein is mRNA-capping enzyme subunit beta (pct1).